Consider the following 225-residue polypeptide: Protein-disulfide oxidoreductase DsbI (225 aa).

Residues 27–47 (FLWLLMAIAMGGLIILAHSFF) form a helical membrane-spanning segment. An intrachain disulfide couples cysteine 56 to cysteine 59. 2 helical membrane-spanning segments follow: residues 65–85 (AMFV…NIVL) and 87–107 (LIGC…SIKL). A disulfide bridge links cysteine 128 with cysteine 154. The chain crosses the membrane as a helical span at residues 199-219 (CMLAFGLCLILLLVMSGAWAL).

It belongs to the DsbB family. DsbI subfamily. As to quaternary structure, interacts with DsbL.

It localises to the cell inner membrane. In terms of biological role, required for disulfide bond formation in some proteins. Part of a redox system composed of DsbI and DsbL that mediates formation of an essential disulfide bond in AssT. This is Protein-disulfide oxidoreductase DsbI from Salmonella choleraesuis (strain SC-B67).